The chain runs to 63 residues: Large ribosomal subunit protein uL29 (63 aa).

It belongs to the universal ribosomal protein uL29 family.

This Ectopseudomonas mendocina (strain ymp) (Pseudomonas mendocina) protein is Large ribosomal subunit protein uL29.